The sequence spans 117 residues: UPF0295 protein GK0479 (117 aa).

The next 2 membrane-spanning stretches (helical) occupy residues 12-32 (IRTFALSLIFIGVIVMYLGLF) and 42-62 (LFMLFGMLFLVASGIVYFWIG).

The protein belongs to the UPF0295 family.

It is found in the cell membrane. The protein is UPF0295 protein GK0479 of Geobacillus kaustophilus (strain HTA426).